A 286-amino-acid chain; its full sequence is MARYVVCWMFTINNPTTLPVMRDEIKYMVYQVERGQEGTRHVQGYVEMKRRSSLKQMRGFFPGAHLEKRKGSQEEARSYCMKEDTRIEGPFEFGSFKLSCNDNLFDVIQDMRETHKRPLEYLYDCPNTFDRSKDTLYRVQAEMNKTKAMNSWRTSFSAWTSEVENIMAQPCHRRIIWVYGPNGGEGKTTYAKHLMKTRNAFYSPGGKSLDICRLYNYEDIVIFDIPRCKEDYLNYGLLEEFKNGIIQSGKYEPVLKIVEYVEVIVMANFLPKEGIFSEDRIKLVSC.

The CRESS-DNA virus Rep endonuclease domain occupies 2 to 96 (ARYVVCWMFT…IEGPFEFGSF (95 aa)). Residues 9–12 (MFTI) carry the RCR-1 motif. Positions 33 and 41 each coordinate a divalent metal cation. The RCR-2 motif lies at 41-43 (HVQ). The Nuclear localization signal signature appears at 50–70 (RRSSLKQMRGFFPGAHLEKRK). Y79 (for DNA cleavage activity) is an active-site residue. An RCR-3 motif is present at residues 79–82 (YCMK). D84 is an a divalent metal cation binding site. The Nuclear localization signal motif lies at 96 to 102 (FKLSCND). 180–188 (GPNGGEGKT) lines the ATP pocket.

The protein belongs to the nanoviridea/circoviridae replication-associated protein family. Homooligomer (Potential). Rep binds to repeated DNA motifs (iterons). The cofactor is Mg(2+). Requires Mn(2+) as cofactor.

The protein resides in the host nucleus. It carries out the reaction ATP + H2O = ADP + phosphate + H(+). Functionally, essential for the replication of all genomic viral ssDNA (trans-replication). The closed circular ssDNA genome is first converted to a superhelical dsDNA. Rep binds a specific hairpin at the genome origin of replication. Introduces an endonucleolytic nick within the conserved sequence 5'-A[GT]TATTAC-3' in the intergenic region of the genome, thereby initiating the rolling circle replication (RCR). Following cleavage, binds covalently to the 5'-phosphate of DNA as a tyrosyl ester. The cleavage gives rise to a free 3'-OH that serves as a primer for the cellular DNA polymerase. The polymerase synthesizes the (+) strand DNA by rolling circle mechanism. After one round of replication, a Rep-catalyzed nucleotidyl transfer reaction releases a circular single-stranded virus genome, thereby terminating the replication. Displays origin-specific DNA cleavage, nucleotidyl transferase, ATPase and helicase activities. This chain is Master replication protein (DNA-R), found in Musa (BBTV).